We begin with the raw amino-acid sequence, 397 residues long: Elongation factor Tu (397 aa).

Residues 10–207 (KPHVNVGTIG…ACDSYIPDPQ (198 aa)) form the tr-type G domain. Positions 19 to 26 (GHIDHGKT) are G1. GTP is bound at residue 19–26 (GHIDHGKT). Threonine 26 is a binding site for Mg(2+). A G2 region spans residues 60-64 (GITIA). A G3 region spans residues 81–84 (DCPG). Residues 81 to 85 (DCPGH) and 136 to 139 (NKCD) each bind GTP. The segment at 136-139 (NKCD) is G4. The tract at residues 174-176 (SAL) is G5.

The protein belongs to the TRAFAC class translation factor GTPase superfamily. Classic translation factor GTPase family. EF-Tu/EF-1A subfamily. In terms of assembly, monomer.

Its subcellular location is the cytoplasm. The catalysed reaction is GTP + H2O = GDP + phosphate + H(+). Functionally, GTP hydrolase that promotes the GTP-dependent binding of aminoacyl-tRNA to the A-site of ribosomes during protein biosynthesis. This chain is Elongation factor Tu, found in Lawsonia intracellularis (strain PHE/MN1-00).